Consider the following 510-residue polypeptide: Maturase K (510 aa).

The protein belongs to the intron maturase 2 family. MatK subfamily.

Its subcellular location is the plastid. It localises to the chloroplast. Its function is as follows. Usually encoded in the trnK tRNA gene intron. Probably assists in splicing its own and other chloroplast group II introns. The protein is Maturase K of Mammillaria haageana (Cactus).